Consider the following 360-residue polypeptide: MLVYLAEYLTQFYSGFNVFSYVTFRAILGLLTALIFSLWWGPKMIERLQMLQIGQVVRNDGPESHFSKRGTPTMGGILILAGVFISVLLWGDLASRYVWVVLFVLASFGLIGFIDDYRKVVRKDTKGLIAKWKYILQSLAALVIAFYLYASADLVGETQLVVPFFKDIMPQLGGFFIVLAYFTIVGSSNAVNLTDGLDGLAIMPTVMVAAAFALIAYLSGHVQFANYLHLPYLPGAGELVIVCTAIVGAGLGFLWFNTYPAQVFMGDVGSLALGAALGVIAVLVRQEILLVIMGGVFVMETVSVILQVGSYKLRGQRIFRMAPIHHHYELKGWPEPRVIVRFWIISLFLVLLGLATLKLR.

The next 10 helical transmembrane spans lie at 21 to 41 (YVTF…LWWG), 74 to 94 (MGGI…GDLA), 97 to 117 (YVWV…IDDY), 135 to 155 (ILQS…ADLV), 168 to 188 (IMPQ…VGSS), 199 to 219 (GLAI…AYLS), 236 to 256 (AGEL…FLWF), 263 to 283 (VFMG…IAVL), 288 to 308 (ILLV…ILQV), and 338 to 358 (VIVR…ATLK).

This sequence belongs to the glycosyltransferase 4 family. MraY subfamily. Mg(2+) serves as cofactor.

The protein localises to the cell inner membrane. It carries out the reaction UDP-N-acetyl-alpha-D-muramoyl-L-alanyl-gamma-D-glutamyl-meso-2,6-diaminopimeloyl-D-alanyl-D-alanine + di-trans,octa-cis-undecaprenyl phosphate = di-trans,octa-cis-undecaprenyl diphospho-N-acetyl-alpha-D-muramoyl-L-alanyl-D-glutamyl-meso-2,6-diaminopimeloyl-D-alanyl-D-alanine + UMP. The protein operates within cell wall biogenesis; peptidoglycan biosynthesis. In terms of biological role, catalyzes the initial step of the lipid cycle reactions in the biosynthesis of the cell wall peptidoglycan: transfers peptidoglycan precursor phospho-MurNAc-pentapeptide from UDP-MurNAc-pentapeptide onto the lipid carrier undecaprenyl phosphate, yielding undecaprenyl-pyrophosphoryl-MurNAc-pentapeptide, known as lipid I. The sequence is that of Phospho-N-acetylmuramoyl-pentapeptide-transferase from Shewanella sediminis (strain HAW-EB3).